A 256-amino-acid chain; its full sequence is Pimeloyl-[acyl-carrier protein] methyl ester esterase (256 aa).

The 228-residue stretch at 15-242 (HLVLLHGWGL…AAHAPFISHP (228 aa)) folds into the AB hydrolase-1 domain. Substrate-binding positions include tryptophan 22, 82–83 (SL), and 143–147 (FLALQ). Residue serine 82 is the Nucleophile of the active site. Active-site residues include aspartate 207 and histidine 235. Histidine 235 is a binding site for substrate.

It belongs to the AB hydrolase superfamily. Carboxylesterase BioH family. Monomer.

It localises to the cytoplasm. The catalysed reaction is 6-carboxyhexanoyl-[ACP] methyl ester + H2O = 6-carboxyhexanoyl-[ACP] + methanol + H(+). It functions in the pathway cofactor biosynthesis; biotin biosynthesis. Its function is as follows. The physiological role of BioH is to remove the methyl group introduced by BioC when the pimeloyl moiety is complete. It allows to synthesize pimeloyl-ACP via the fatty acid synthetic pathway through the hydrolysis of the ester bonds of pimeloyl-ACP esters. In Citrobacter koseri (strain ATCC BAA-895 / CDC 4225-83 / SGSC4696), this protein is Pimeloyl-[acyl-carrier protein] methyl ester esterase.